We begin with the raw amino-acid sequence, 48 residues long: Large ribosomal subunit protein eL40 (48 aa).

This sequence belongs to the eukaryotic ribosomal protein eL40 family.

This is Large ribosomal subunit protein eL40 from Methanosphaera stadtmanae (strain ATCC 43021 / DSM 3091 / JCM 11832 / MCB-3).